Reading from the N-terminus, the 322-residue chain is MDQPISVTLSSTTDPLWRSCHEYDNEMVITVNGRRIFPTLEYTVTGLDTFKLYSMCMHLDLVDDKKLRFTGGQWAESVSTEKKDPPRKVWHHNGSQTGKDWMLRNVSFDQIRITNRKSKEDGNASYVHLLTQHRYIPVLTIYEGDQLVHTARIPHSQFISVTAYHKGELNTLKTNNNPYSTGSRKDRRRERQSPVYSEGTSSEKSISPPPAKKIKDMAPALPDYSVISKPNLLQSLIFPMIAEQPSTSQSPPAPPVFPFNPDLQMQMLQPFMLPQFGFPCGFPSINPFMNPFLTPFTSMFPTPTVSPDGEGVKLEPEAFVEV.

Positions 16 to 185 (LWRSCHEYDN…NNPYSTGSRK (170 aa)) form a DNA-binding region, T-box. Polar residues predominate over residues 171–182 (TLKTNNNPYSTG). The tract at residues 171–214 (TLKTNNNPYSTGSRKDRRRERQSPVYSEGTSSEKSISPPPAKKI) is disordered.

It localises to the nucleus. This Caenorhabditis elegans protein is Putative T-box protein 11 (tbx-11).